We begin with the raw amino-acid sequence, 862 residues long: Fork head protein homolog 2 (862 aa).

Residues 83–152 (VSIGRNTDPL…NGAKVNFQRT (70 aa)) form the FHA domain. Residues 339 to 430 (VKPPHSYATM…QQEFLNKWNT (92 aa)) constitute a DNA-binding region (fork-head). 4 disordered regions span residues 498 to 528 (PSKG…QEQR), 611 to 663 (SDSA…GTTT), 698 to 730 (PERG…LQTS), and 750 to 846 (ESNN…ANAK). Over residues 504-520 (PASQQSQPPVSHQNQSQ) the composition is skewed to low complexity. Residues 611–644 (SDSADKSTNNNGGTKMNLPAISTSSLDENGNLEP) show a composition bias toward polar residues. Low complexity predominate over residues 645 to 655 (TTTTSSGNSNS). S708 carries the phosphoserine modification. Residues 712–726 (SNSNNTNNNGANNSN) show a composition bias toward low complexity. Polar residues-rich tracts occupy residues 750-770 (ESNN…NVKS) and 778-788 (LQFSSTNNTPA). Basic and acidic residues predominate over residues 804–829 (IKAKENENATSEKDSDSNSNDLETKD). Over residues 830–844 (INSSPLKNQGGSTAN) the composition is skewed to polar residues. Phosphoserine occurs at positions 832 and 833.

In terms of assembly, interacts with MCM1. Interacts with NDD1. Interacts with the origin recognition complex (ORC) composed of ORC1 to ORC6.

Its subcellular location is the nucleus. The protein localises to the cytoplasm. It is found in the cytosol. In terms of biological role, transcription factor that regulates the expression of the CLB2 cluster of genes during the G2/M phase of the mitotic cell cycle. The CLB2 cluster of genes includes mitotic regulators such as CLB1, CLB2, CDC5 and CDC20 as well as SWI5 and ACE2, transcription factors required for the subsequent temporal wave of cell cycle regulated gene expression in the M/G1 phase interval. Involved in HMRa silencing. FKH1 and FKH2 associate with the coding regions of active genes and influence, in opposing ways, transcriptional elongation and termination, and coordinate early transcription elongation and pre-mRNA processing. Both FKH1 and FKH2 play a role as regulators of lifespan in collaboration with the anaphase-promoting complex (APC), likely through combined regulation of stress response, genomic stability, and cell cycle regulation. FKH1 and FKH2 function also in controlling yeast cell morphology by preventing preudohyphal growth. Acts as a rate-limiting replication origin activator via its interaction with the origin recognition complex (ORC). This is Fork head protein homolog 2 from Saccharomyces cerevisiae (strain ATCC 204508 / S288c) (Baker's yeast).